The primary structure comprises 957 residues: Calsyntenin-3 (957 aa).

An N-terminal signal peptide occupies residues 1 to 19 (MTLLLVSLLLASLLQISSG). Topologically, residues 1–21 (MTLLLVSLLLASLLQISSGNK) are cytoplasmic. At 20 to 848 (NKANKHKPWI…SHRNSMVPSA (829 aa)) the chain is on the extracellular side. Positions 22–42 (ANKHKPWIEAEYQGIVMENDN) form an intramembrane region, helical. Cadherin domains are found at residues 29–145 (IEAE…APVF) and 146–246 (VERL…KPSW). Over 43–73 (TVLLNPPLFALDKDAPLRYAGEICGFRLHGS) the chain is Cytoplasmic. Residues 74–94 (GVPFKAVILDKATGEGLIRAK) constitute an intramembrane region (helical). Topologically, residues 95-139 (EPVDCEAQKEHTFTTQAYDCVDGPDGANTKKSHKATVHVRVNDVN) are cytoplasmic. The helical intramembrane region spans 140–160 (EFAPVFVERLYRAAVTEGKLY). The Cytoplasmic portion of the chain corresponds to 161–248 (DRILRVEAID…KPTCKPSWQG (88 aa)). Residues 249–269 (WNKRIEYAPGAGSLALFPGIR) form a helical membrane-spanning segment. Residues 270–357 (LETCDEPLWN…GTQAVQVPLG (88 aa)) lie on the Lumenal side of the membrane. N-linked (GlcNAc...) asparagine glycosylation is found at asparagine 299, asparagine 327, asparagine 347, asparagine 508, and asparagine 741. Residues 849-869 (ATLIIVVCVGFLVLMVILGLV) form a helical membrane-spanning segment. Over 870 to 957 (RIHSLHRRVS…RIIESPPHRY (88 aa)) the chain is Cytoplasmic. A disordered region spans residues 916-957 (QQTGVAGVAGGQQEEEDSSDSEAADSPSSDERRIIESPPHRY). The segment covering 928-938 (QEEEDSSDSEA) has biased composition (acidic residues). Residues 944–957 (SDERRIIESPPHRY) show a composition bias toward basic and acidic residues.

The protein belongs to the calsyntenin family. As to quaternary structure, interacts (via cadherin domains) with both alpha and beta isoforms of neurexins (NRXN1, NRXN2 and NRXN3). Directly interacts with APBA2. Forms a tripartite complex with APBA2 and APP. Interacts with low affinity with KLC1. Interacts with SLC23A2/SVCT2. In terms of assembly, interacts with CIDEA; inhibiting the lipid transferase activity of CIDEA. Interacts with CIDEC; inhibiting the lipid transferase activity of CIDEC. Post-translationally, proteolytically processed under normal cellular conditions. A primary zeta-cleavage generates a large extracellular (soluble) N-terminal domain (sAlc) and a short C-terminal transmembrane fragment (CTF1). A secondary cleavage catalyzed by gamma-secretase within the transmembrane domain releases the beta-Alc-beta chain in the extracellular milieu and produces an intracellular fragment (AlcICD). This processing is strongly suppressed in the tripartite complex formed with APBA2 and APP, which seems to prevent the association with gamma-secretase. Ubiquitinated: endoplasmic reticulum-localized protein is ubiquitinated and degraded by the endoplasmic reticulum-associated degradation (ERAD) pathway.

Its subcellular location is the postsynaptic cell membrane. The protein resides in the endoplasmic reticulum membrane. The protein localises to the golgi apparatus membrane. It localises to the cell projection. It is found in the dendrite. Its subcellular location is the lipid droplet. In terms of biological role, postsynaptic adhesion molecule that binds to presynaptic neurexins to mediate both excitatory and inhibitory synapse formation. Promotes synapse development by acting as a cell adhesion molecule at the postsynaptic membrane, which associates with both neurexin-alpha and neurexin-beta proteins at the presynaptic membrane. Regulates the balance between excitatory and inhibitory synapses by inhibiting formation of excitatory parallel-fiber synapses and promoting formation of inhibitory synapses in the same neuron. May also be involved in ascorbate (vitamin C) uptake via its interaction with SLC23A2/SVCT2. Complex formation with APBA2 and APP, stabilizes APP metabolism and enhances APBA2-mediated suppression of beta-APP40 secretion, due to the retardation of intracellular APP maturation. Its function is as follows. Adipose-specific isoform that plays a key role in adaptive thermogenesis. Facilitates the efficient use of stored triglyceride by promoting multilocular morphology of thermogenic adipocytes: acts by inhibiting the activity of CIDEA and CIDEC on lipid droplets, thereby preventing lipid droplet fusion and facilitating lipid utilization. May also participate in adaptive thermogenesis by promoting sympathetic innervation of thermogenic adipose tissue: acts by driving secretion of neurotrophic factor S100B from brown adipocytes, stimulating neurite outgrowth from sympathetic neurons. This chain is Calsyntenin-3, found in Rattus norvegicus (Rat).